The chain runs to 398 residues: 1-deoxy-D-xylulose 5-phosphate reductoisomerase (398 aa).

NADPH contacts are provided by Thr-10, Gly-11, Ser-12, Val-13, Gly-36, Arg-37, Asn-38, and Asn-124. Lys-125 contacts 1-deoxy-D-xylulose 5-phosphate. Glu-126 provides a ligand contact to NADPH. A Mn(2+)-binding site is contributed by Asp-150. 1-deoxy-D-xylulose 5-phosphate-binding residues include Ser-151, Glu-152, Ser-186, and His-209. Mn(2+) is bound at residue Glu-152. Residue Gly-215 participates in NADPH binding. The 1-deoxy-D-xylulose 5-phosphate site is built by Ser-222, Asn-227, Lys-228, and Glu-231. Residue Glu-231 coordinates Mn(2+).

It belongs to the DXR family. Homodimer. Requires Mg(2+) as cofactor. Mn(2+) serves as cofactor.

The enzyme catalyses 2-C-methyl-D-erythritol 4-phosphate + NADP(+) = 1-deoxy-D-xylulose 5-phosphate + NADPH + H(+). Its pathway is isoprenoid biosynthesis; isopentenyl diphosphate biosynthesis via DXP pathway; isopentenyl diphosphate from 1-deoxy-D-xylulose 5-phosphate: step 1/6. Its function is as follows. Catalyzes the NADPH-dependent rearrangement and reduction of 1-deoxy-D-xylulose-5-phosphate (DXP) to 2-C-methyl-D-erythritol 4-phosphate (MEP). This Serratia proteamaculans (strain 568) protein is 1-deoxy-D-xylulose 5-phosphate reductoisomerase.